The primary structure comprises 130 residues: Methylglyoxal synthase (130 aa).

The MGS-like domain maps to 1 to 130 (MSTPRIALIA…DLARRLTANA (130 aa)). Substrate-binding positions include histidine 11, lysine 15, 37-40 (TGTT), and 57-58 (SG). Aspartate 63 serves as the catalytic Proton donor/acceptor. Histidine 90 serves as a coordination point for substrate.

The protein belongs to the methylglyoxal synthase family.

It catalyses the reaction dihydroxyacetone phosphate = methylglyoxal + phosphate. Its function is as follows. Catalyzes the formation of methylglyoxal from dihydroxyacetone phosphate. The sequence is that of Methylglyoxal synthase from Burkholderia mallei (strain NCTC 10247).